The primary structure comprises 344 residues: Phenylalanine--tRNA ligase alpha subunit (344 aa).

E255 contributes to the Mg(2+) binding site.

The protein belongs to the class-II aminoacyl-tRNA synthetase family. Phe-tRNA synthetase alpha subunit type 1 subfamily. In terms of assembly, tetramer of two alpha and two beta subunits. It depends on Mg(2+) as a cofactor.

The protein localises to the cytoplasm. The enzyme catalyses tRNA(Phe) + L-phenylalanine + ATP = L-phenylalanyl-tRNA(Phe) + AMP + diphosphate + H(+). This Persephonella marina (strain DSM 14350 / EX-H1) protein is Phenylalanine--tRNA ligase alpha subunit.